The primary structure comprises 278 residues: 4-deoxy-L-threo-5-hexosulose-uronate ketol-isomerase (278 aa).

Zn(2+) contacts are provided by H196, H198, E203, and H245.

This sequence belongs to the KduI family. Zn(2+) is required as a cofactor.

It catalyses the reaction 5-dehydro-4-deoxy-D-glucuronate = 3-deoxy-D-glycero-2,5-hexodiulosonate. It functions in the pathway glycan metabolism; pectin degradation; 2-dehydro-3-deoxy-D-gluconate from pectin: step 4/5. Its function is as follows. Catalyzes the isomerization of 5-dehydro-4-deoxy-D-glucuronate to 3-deoxy-D-glycero-2,5-hexodiulosonate. This chain is 4-deoxy-L-threo-5-hexosulose-uronate ketol-isomerase, found in Salmonella typhimurium (strain LT2 / SGSC1412 / ATCC 700720).